The primary structure comprises 1006 residues: MSNIKLGVEVISAQGLLQRDKHNSCSPFVELKFDNQIFRATTKHNDPNPVWHECFYFVVSDPSVLSTRTLEAHVYSYQNEFDAKPFLGKVRVNGTSFVPRSEAAPFNYPLEKRSVFSRARGELCLRVFITDDPSVTPSVPTPVPESPQAYSPSPRKEHVKSLITADASMATDERRELKPKTRTFHNSAPLVKQQPMMNYGIHEMRAAPMPPRVVQVNGPGPSLHQLPPDFSVKETSPLLGGGRIVGGRVVRGTERPTSGTYDLVEEMKFLYVRVVKARDLPNKDLTGSLDPYVVVKIGNFKGVTTHFNKNTDPEWNQVFAFAKDNLQSNFLEVMVKDKDILLDDFVGIVKFDLREVQSRVPPDSPLAPQWYRLENKRGEKKNYEIMLAVWSGTQADEAFGDATFSDSLVDSDSSNIISANLRSKVYHSPRLWYLRVQILEAQDVIIVSDKSRVPEVFVRVKVGNQMLRTKFPQRSNNPKWGDEFTFVVAEPFEDNLVLSVEDHTAPNRDEPVGKAVILMNDIEKRIDDKPFHDRWVHLEDSISDAMDVDKAKKVKFATRLRYKAVLDGGYHVFDESMYNSSDLRPSSRKLWKPAIGVLELGILNANVFHSMKTREGKGTSDTYVVAKYGHKWVRSRTVINSMNPKYNEQYTWEVFDPATVLTICVFDNAHFAAGDGGNKRDQPIGKVRIRLSTLQTGRVYTHAYPLLVLQPTGLKKRGELHLAVRFTCTSVSSMLMKYTKPLLPKMHYILPLSTNQQEALKMQAINIIIVRLGRSEPPLRREVVDYLTDWKSQLFSMRRSKANFNRFTTVFSGALSVWKWMEQVCTWKTPVTTALVHVLYTMLVTFPEMILPTVFLYMAVIGMWNYRFKPRFPPHMDAKLSYADNVNSDELDEEFDTFPTVRAPDIVKMRYDRLRSVAGKVQSVAGDIAAQGERVQALLSWRDPRATAIFVTFCFIIAMALYITPFKLVALLSGYYFMRHPKLRHRIPSAPVNFFRRLPAMTDSML.

Residues 1–108 (MSNIKLGVEV…PRSEAAPFNY (108 aa)) form the C2 1 domain. Residues 135-156 (VTPSVPTPVPESPQAYSPSPRK) form a disordered region. 3 C2 domains span residues 251-371 (RGTE…PQWY), 411-536 (SDSS…DRWV), and 579-704 (NSSD…THAY). The Ca(2+) site is built by Asp-284, Asp-290, Asp-337, Asp-339, and Asp-344. 2 helical membrane passes run 842-862 (MLVTFPEMILPTVFLYMAVIG) and 946-966 (ATAIFVTFCFIIAMALYITPF).

It belongs to the MCTP family. It depends on Ca(2+) as a cofactor. Expressed in incipient leaf primordia and roots meristems. Observed in flowers.

The protein localises to the cell membrane. It localises to the cytoplasm. In terms of biological role, may function as a signaling molecule by regulating the trafficking of other regulators. The polypeptide is Multiple C2 domain and transmembrane region protein 9 (Arabidopsis thaliana (Mouse-ear cress)).